The primary structure comprises 277 residues: Probable diphthine methyl ester synthase (277 aa).

S-adenosyl-L-methionine contacts are provided by residues leucine 9, aspartate 89, glycine 92, 117-118 (SV), leucine 168, leucine 227, and histidine 252.

This sequence belongs to the diphthine synthase family.

The catalysed reaction is 2-[(3S)-amino-3-carboxypropyl]-L-histidyl-[translation elongation factor 2] + 4 S-adenosyl-L-methionine = diphthine methyl ester-[translation elongation factor 2] + 4 S-adenosyl-L-homocysteine + 3 H(+). It functions in the pathway protein modification; peptidyl-diphthamide biosynthesis. In terms of biological role, S-adenosyl-L-methionine-dependent methyltransferase that catalyzes four methylations of the modified target histidine residue in translation elongation factor 2 (EF-2), to form an intermediate called diphthine methyl ester. The four successive methylation reactions represent the second step of diphthamide biosynthesis. The sequence is that of Probable diphthine methyl ester synthase from Arabidopsis thaliana (Mouse-ear cress).